The following is a 99-amino-acid chain: Integration host factor subunit alpha (99 aa).

Belongs to the bacterial histone-like protein family. In terms of assembly, heterodimer of an alpha and a beta chain.

In terms of biological role, this protein is one of the two subunits of integration host factor, a specific DNA-binding protein that functions in genetic recombination as well as in transcriptional and translational control. The sequence is that of Integration host factor subunit alpha from Nitrosococcus oceani (strain ATCC 19707 / BCRC 17464 / JCM 30415 / NCIMB 11848 / C-107).